A 162-amino-acid chain; its full sequence is Retinoic acid receptor responder protein 2 (162 aa).

A signal peptide spans 1–20 (MWQLLLPLALGLGTMGLGRA). 3 cysteine pairs are disulfide-bonded: Cys77-Cys87, Cys98-Cys117, and Cys101-Cys135. The propeptide occupies 156–162 (FIKALSP).

In terms of processing, secreted in an inactive precursor form, prochemerin, which is proteolytically processed by a variety of extracellular proteases to generate forms with differing levels of bioactivity. For example, the removal of five amino acids results in chemerin-157, which exhibits the highest activity, while removal of six amino acids results in chemerin-156 which has slightly less activity. Some proteases are able to cleave at more than one site and chemerin forms may be sequentially processed by different enzymes to modulate activity levels. The coordinated expression and activity of chemerin-modifying enzymes is essential for regulating its bioactivation, inactivation and, consequently, biological function. Cathepsin G cleaves six C-terminal amino acids from prochemerin (chemerin-156), elastase is able to cleave five (chemerin-157), seven (chemerin-155) or ten (chemerin-152), plasmin cleaves four amino acids (chemerin-158), and tryptase cleaves four (chemerin-158) or seven (chemerin-155). Multiple cleavages might be required to fully activate chemerin, with an initial tryptase cleavage resulting in chemerin with low activity (chemerin-158), and a second cleavage by carboxypeptidase N or B producing highly active chemerin (chemerin-157).

The protein resides in the secreted. Adipocyte-secreted protein (adipokine) that regulates adipogenesis, metabolism and inflammation through activation of the chemokine-like receptor 1 (CMKLR1). Also acts as a ligand for CMKLR2. Can also bind to C-C chemokine receptor-like 2 (CCRL2), but with a lower affinity than it does to CMKLR1 or CMKLR2. Positively regulates adipocyte differentiation, modulates the expression of adipocyte genes involved in lipid and glucose metabolism and might play a role in angiogenesis, a process essential for the expansion of white adipose tissue. Also acts as a pro-inflammatory adipokine, causing an increase in secretion of pro-inflammatory and prodiabetic adipokines, which further impair adipose tissue metabolic function and have negative systemic effects including impaired insulin sensitivity, altered glucose and lipid metabolism, and a decrease in vascular function in other tissues. Can have both pro- and anti-inflammatory properties depending on the modality of enzymatic cleavage by different classes of proteases. Acts as a chemotactic factor for leukocyte populations expressing CMKLR1, particularly immature plasmacytoid dendritic cells, but also immature myeloid DCs, macrophages and natural killer cells. Exerts an anti-inflammatory role by preventing TNF/TNFA-induced VCAM1 expression and monocytes adhesion in vascular endothelial cells. The effect is mediated via inhibiting activation of NF-kappa-B and CRK/p38 through stimulation of AKT1/NOS3 signaling and nitric oxide production. Exhibits an antimicrobial function in the skin. This is Retinoic acid receptor responder protein 2 (RARRES2) from Bos taurus (Bovine).